The sequence spans 506 residues: ATP synthase subunit alpha (506 aa).

171-178 lines the ATP pocket; it reads GDRQTGKT.

This sequence belongs to the ATPase alpha/beta chains family. In terms of assembly, F-type ATPases have 2 components, CF(1) - the catalytic core - and CF(0) - the membrane proton channel. CF(1) has five subunits: alpha(3), beta(3), gamma(1), delta(1), epsilon(1). CF(0) has four main subunits: a, b, b' and c.

Its subcellular location is the cellular thylakoid membrane. It catalyses the reaction ATP + H2O + 4 H(+)(in) = ADP + phosphate + 5 H(+)(out). Functionally, produces ATP from ADP in the presence of a proton gradient across the membrane. The alpha chain is a regulatory subunit. This is ATP synthase subunit alpha from Nostoc punctiforme (strain ATCC 29133 / PCC 73102).